A 202-amino-acid chain; its full sequence is Imidazoleglycerol-phosphate dehydratase (202 aa).

The protein belongs to the imidazoleglycerol-phosphate dehydratase family.

The protein resides in the cytoplasm. It catalyses the reaction D-erythro-1-(imidazol-4-yl)glycerol 3-phosphate = 3-(imidazol-4-yl)-2-oxopropyl phosphate + H2O. It functions in the pathway amino-acid biosynthesis; L-histidine biosynthesis; L-histidine from 5-phospho-alpha-D-ribose 1-diphosphate: step 6/9. The polypeptide is Imidazoleglycerol-phosphate dehydratase (Clavibacter michiganensis subsp. michiganensis (strain NCPPB 382)).